The chain runs to 3994 residues: Hybrid PKS-NRPs synthetase opdA (3994 aa).

The Ketosynthase family 3 (KS3) domain occupies 6-442; that stretch reads PEPIAIVGSS…GTNSHVILES (437 aa). Catalysis depends on for beta-ketoacyl synthase activity residues C179, H316, and H362. The malonyl-CoA:ACP transacylase (MAT) domain stretch occupies residues 559–881; it reads VFTGQGAQWP…LKRDSNDVEA (323 aa). The interval 951–1085 is N-terminal hotdog fold; that stretch reads HELLGRRTHD…GRLIIHLGET (135 aa). Positions 951–1251 are dehydratase (DH) domain; that stretch reads HELLGRRTHD…SVKPMAPPTA (301 aa). The PKS/mFAS DH domain maps to 951 to 1252; the sequence is HELLGRRTHD…VKPMAPPTAE (302 aa). The active-site Proton acceptor; for dehydratase activity is H983. Positions 1100–1252 are C-terminal hotdog fold; it reads LLSVDTDEGY…VKPMAPPTAE (153 aa). D1159 (proton donor; for dehydratase activity) is an active-site residue. Residues 1292 to 1593 form a methyltransferase (MT) domain region; that stretch reads DRVVLYYVQR…VDLAFHDLPD (302 aa). A ketoreductase (KR) domain region spans residues 2123–2297; sequence TYLMVGMAGG…ASIIHIGFVT (175 aa). The region spanning 2406-2483 is the Carrier 1 domain; it reads EAVEITQKAF…QICTNAAKQL (78 aa). S2443 is modified (O-(pantetheine 4'-phosphoryl)serine). A disordered region spans residues 2486 to 2575; sequence QKGGQEPSEQ…FDPDDRDYNP (90 aa). Polar residues-rich tracts occupy residues 2505-2514 and 2522-2546; these read LHVSQGSLHT and TETS…SVTD. Residues 2547-2556 are compositionally biased toward basic and acidic residues; it reads TVEKRDKGDI. Residues 2557–2570 are compositionally biased toward acidic residues; the sequence is SVDEGPNEQFDPDD. The segment at 2582–3007 is condensation (C) domain; it reads RLSSGQSRIY…SNTYMTVAKI (426 aa). The tract at residues 3043 to 3436 is adenylation (A) (KR) domain; sequence HETNREDLAI…DGSLVFLGRL (394 aa). A Carrier 2 domain is found at 3553–3630; it reads PKLSLRQSEL…KMTMLVDLER (78 aa). S3590 bears the O-(pantetheine 4'-phosphoryl)serine mark. Positions 3679–3895 are reductase (RED) domain; it reads TGATGFLGGS…FDFKKVEEVA (217 aa).

This sequence in the C-terminal section; belongs to the NRP synthetase family. Pantetheine 4'-phosphate is required as a cofactor.

It participates in secondary metabolite biosynthesis. Hybrid PKS-NRPS synthetase; part of the gene cluster that mediates the biosynthesis of oxopyrrolidines, polyketide-amino acid hybrid compounds with feature structures of tetramic acid. The polyketide chain is first assembled by the highly reducing PKS module of opdA using acetyl-CoA as the starter unit and five malonyl-CoA as the extender units. OpdC acts as trans-acting enoyl reductase and reduces the terminal alkenyl to alkane. The 17R in oxopyrrolidine A and 15R, 17S in oxopyrrolidine B are generated by non-stereospecific catalysis of the ketoreductase (KR) domain and enoyl reductases. Then the polyketides with specific configurations are transferred to the NRPS module of opdA and linked to L-tyrosine to form an amide bond. Finally, the oxopyrrolidines are offloaded through a Dieckmann cyclization catalyzed by the terminal D domain to give a tetramic acid moiety. The protein is Hybrid PKS-NRPs synthetase opdA of Penicillium oxalicum (strain 114-2 / CGMCC 5302) (Penicillium decumbens).